We begin with the raw amino-acid sequence, 313 residues long: Protoheme IX farnesyltransferase (313 aa).

Helical transmembrane passes span 34–54 (VIEL…RGTV), 56–76 (PLLI…ANTL), 105–125 (HALI…WWTT), 128–148 (LSAH…TLVL), 152–172 (TSQN…IGWS), 173–193 (AVTG…FFWT), 243–263 (LALA…TWFL), and 291–311 (YLAV…PTLF).

Belongs to the UbiA prenyltransferase family. Protoheme IX farnesyltransferase subfamily.

It localises to the cell membrane. It catalyses the reaction heme b + (2E,6E)-farnesyl diphosphate + H2O = Fe(II)-heme o + diphosphate. Its pathway is porphyrin-containing compound metabolism; heme O biosynthesis; heme O from protoheme: step 1/1. In terms of biological role, converts heme B (protoheme IX) to heme O by substitution of the vinyl group on carbon 2 of heme B porphyrin ring with a hydroxyethyl farnesyl side group. This Mycolicibacterium vanbaalenii (strain DSM 7251 / JCM 13017 / BCRC 16820 / KCTC 9966 / NRRL B-24157 / PYR-1) (Mycobacterium vanbaalenii) protein is Protoheme IX farnesyltransferase.